A 53-amino-acid polypeptide reads, in one-letter code: UPF0391 membrane protein PA5482 (53 aa).

2 consecutive transmembrane segments (helical) span residues 4–24 (WAIT…GGIA) and 29–49 (GIAK…FFFG).

Belongs to the UPF0391 family.

It is found in the cell membrane. The chain is UPF0391 membrane protein PA5482 from Pseudomonas aeruginosa (strain ATCC 15692 / DSM 22644 / CIP 104116 / JCM 14847 / LMG 12228 / 1C / PRS 101 / PAO1).